A 66-amino-acid chain; its full sequence is COP-associated protein (66 aa).

In terms of domain architecture, HMA spans 1–66 (MKIDIPVKGM…AILDAGYELG (66 aa)). Cysteine 12 and cysteine 15 together coordinate Cu cation.

Part of a cation-transporting system which is associated with copper export out of the H.pylori cells. This chain is COP-associated protein (copP), found in Helicobacter felis (strain ATCC 49179 / CCUG 28539 / NCTC 12436 / CS1).